Consider the following 621-residue polypeptide: UvrABC system protein C (621 aa).

Positions 20–98 (TAPGVYRMYA…IKSLTPRYNV (79 aa)) constitute a GIY-YIG domain. A UVR domain is found at 207–242 (DLLAEELIQAMQVASEHLEFEQAARLRDLLTSLRSM).

It belongs to the UvrC family. In terms of assembly, interacts with UvrB in an incision complex.

The protein localises to the cytoplasm. Functionally, the UvrABC repair system catalyzes the recognition and processing of DNA lesions. UvrC both incises the 5' and 3' sides of the lesion. The N-terminal half is responsible for the 3' incision and the C-terminal half is responsible for the 5' incision. This Xylella fastidiosa (strain M23) protein is UvrABC system protein C.